Here is a 705-residue protein sequence, read N- to C-terminus: MAQRSPQELFHEAAQQGILAQPQPWWKIQLFMWEPVLFGTWDGVFTSCMINIFGVVLFLRTGWLVGNTGVLLGLLLVSFVVLVALITVLSGIGVAEHGGISSGGVYSMISSVLGGQMGGTVGLLYVFGQCVAGAMYITGFAESISDLLGLGDIWAVRGISVAVLLALLGINLAGVKWIIRLQLLLLLLLAVSTLDFVVGSFTHLDPEHGFIGYSPELLQSNILPEYSPGESFFTVFGVFFPAATGVMAGFNMGGDLRDPADSVPLGSLAAVGVSWFLYIIFAFLLGAVCTREALRSDFLIAEKVSLVGFLFLLGLYISSLASCMGGLYGAPRILQCIAQDKVIPALAFLANGKGPNKTPVAAICLTSLVTMAFVLVGQVNVLAPVVTINFMLTYIMVDYSYFALSMAHCGLAPSPEPVPRQGPDTLHCSEHLLQDRAPSYGSDVPARSLSEGTLLEFTKDMDQFLQPIEELESRQLGSREGNNPKNQKRKGKKGAKQTLQDSFLLDPGSPLSFPTRTSERLSVAFCGEQESYQKQQTSRSESHDHLVPDLRNQPRVNREDFFLKCRLQEQEIQRRPSVFYACMCNPWVSLLGALASLLIMFVIQWLYTLASMGVAALVYFYIGQASPGLYLGSASNFSFFQWMKSFLVPSCRSLRSAQEQIILAPSPAKVDMAMTQLTQDNADFATRDRYHHSSFLSREQLMPPY.

11 consecutive transmembrane segments (helical) span residues phenylalanine 38–phenylalanine 58, glycine 69–leucine 89, isoleucine 92–valine 112, valine 121–alanine 141, isoleucine 159–isoleucine 179, leucine 181–phenylalanine 201, phenylalanine 232–methionine 252, leucine 268–valine 288, leucine 306–glycine 326, leucine 368–isoleucine 388, and phenylalanine 390–glycine 410. The segment at glutamate 472 to serine 512 is disordered. The segment covering asparagine 486 to alanine 495 has biased composition (basic residues). Helical transmembrane passes span tryptophan 587–tyrosine 607 and methionine 612–glycine 632.

The protein belongs to the SLC12A transporter family.

The protein localises to the membrane. Its function is as follows. Cation/chloride cotransporter that may play a role in the control of keratinocyte proliferation. The chain is Solute carrier family 12 member 8 (Slc12a8) from Mus musculus (Mouse).